The primary structure comprises 447 residues: Putative FBD-associated F-box protein At1g61330 (447 aa).

Residues 10 to 57 (KLIKRLSDELVECILSFLPVQSTLQHRVLSKRYRDTWKLSRDLDFSGI) enclose the F-box domain. Residues 384 to 416 (VKIIGYKGHWHELDIVEFFVKNAPSLKRLELQM) enclose the FBD domain.

The protein is Putative FBD-associated F-box protein At1g61330 of Arabidopsis thaliana (Mouse-ear cress).